We begin with the raw amino-acid sequence, 183 residues long: UPF0398 protein MCCL_1095 (183 aa).

It belongs to the UPF0398 family.

This chain is UPF0398 protein MCCL_1095, found in Macrococcus caseolyticus (strain JCSC5402) (Macrococcoides caseolyticum).